The chain runs to 131 residues: UPF0102 protein YraN (131 aa).

Over residues 1–19 (MATVPTRSGSPRQLTTKQT) the composition is skewed to polar residues. The tract at residues 1-20 (MATVPTRSGSPRQLTTKQTG) is disordered.

Belongs to the UPF0102 family.

This chain is UPF0102 protein YraN, found in Escherichia coli O8 (strain IAI1).